The sequence spans 291 residues: MVWKKLGSRNFSSCPSGSIQWIWDVLGECAQDGWDEASVGLGLISILCFAASTFPQFIKAYKTGNMDQALSLWFLLGWIGGDSCNLIGSFLADQLPLQTYTAVYYVLADLVMLTLYFYYKFRTRPSLLSAPINSVLLFLMGMACATPLLSAAGPVAAPREAFRGRALLSVESGSKPFTRQEVIGFVIGSISSVLYLLSRLPQIRTNFLRKSTQGISYSLFALVMLGNTLYGLSVLLKNPEEGQSEGSYLLHHLPWLVGSLGVLLLDTIISIQFLVYRRSTAASELEPLLPS.

The Lumenal segment spans residues 1-37 (MVWKKLGSRNFSSCPSGSIQWIWDVLGECAQDGWDEA). Asn10 carries an N-linked (GlcNAc...) asparagine glycan. The 67-residue stretch at 34–100 (WDEASVGLGL…LADQLPLQTY (67 aa)) folds into the PQ-loop 1 domain. Residues 38 to 58 (SVGLGLISILCFAASTFPQFI) form a helical membrane-spanning segment. The Cytoplasmic segment spans residues 59–71 (KAYKTGNMDQALS). The helical transmembrane segment at 72 to 92 (LWFLLGWIGGDSCNLIGSFLA) threads the bilayer. Topologically, residues 93–98 (DQLPLQ) are lumenal. Residues 99–119 (TYTAVYYVLADLVMLTLYFYY) traverse the membrane as a helical segment. Residues 120 to 134 (KFRTRPSLLSAPINS) are Cytoplasmic-facing. A helical membrane pass occupies residues 135–155 (VLLFLMGMACATPLLSAAGPV). The Lumenal segment spans residues 156–182 (AAPREAFRGRALLSVESGSKPFTRQEV). A helical transmembrane segment spans residues 183 to 203 (IGFVIGSISSVLYLLSRLPQI). The PQ-loop 2 domain maps to 184 to 243 (GFVIGSISSVLYLLSRLPQIRTNFLRKSTQGISYSLFALVMLGNTLYGLSVLLKNPEEGQ). Residues 204–214 (RTNFLRKSTQG) are Cytoplasmic-facing. A helical transmembrane segment spans residues 215 to 235 (ISYSLFALVMLGNTLYGLSVL). The Lumenal portion of the chain corresponds to 236-254 (LKNPEEGQSEGSYLLHHLP). The chain crosses the membrane as a helical span at residues 255 to 275 (WLVGSLGVLLLDTIISIQFLV). At 276 to 291 (YRRSTAASELEPLLPS) the chain is on the cytoplasmic side. Positions 288 to 289 (LL) match the Di-leucine motif motif.

The protein belongs to the laat-1 family.

The protein resides in the lysosome membrane. Its function is as follows. Amino acid transporter that specifically mediates the pH-dependent export of the cationic amino acids arginine, histidine and lysine from lysosomes. The protein is Lysosomal amino acid transporter 1 homolog of Homo sapiens (Human).